The following is an 870-amino-acid chain: Valine--tRNA ligase (870 aa).

A 'HIGH' region motif is present at residues 42–52 (PNVTGVLHIGH). Positions 527–531 (KMSKS) match the 'KMSKS' region motif. Lys530 is an ATP binding site. Positions 800–870 (LENVDLSGIL…ISVELQNLRG (71 aa)) form a coiled coil.

This sequence belongs to the class-I aminoacyl-tRNA synthetase family. ValS type 1 subfamily. As to quaternary structure, monomer.

It localises to the cytoplasm. It carries out the reaction tRNA(Val) + L-valine + ATP = L-valyl-tRNA(Val) + AMP + diphosphate. Functionally, catalyzes the attachment of valine to tRNA(Val). As ValRS can inadvertently accommodate and process structurally similar amino acids such as threonine, to avoid such errors, it has a 'posttransfer' editing activity that hydrolyzes mischarged Thr-tRNA(Val) in a tRNA-dependent manner. The chain is Valine--tRNA ligase from Campylobacter jejuni subsp. jejuni serotype O:2 (strain ATCC 700819 / NCTC 11168).